We begin with the raw amino-acid sequence, 77 residues long: Large ribosomal subunit protein uL24 (77 aa).

Positions 42-61 are disordered; sequence KKHQKPSQTNANGGVVESEG.

Belongs to the universal ribosomal protein uL24 family. As to quaternary structure, part of the 50S ribosomal subunit.

Its function is as follows. One of two assembly initiator proteins, it binds directly to the 5'-end of the 23S rRNA, where it nucleates assembly of the 50S subunit. In terms of biological role, one of the proteins that surrounds the polypeptide exit tunnel on the outside of the subunit. This is Large ribosomal subunit protein uL24 from Lactobacillus acidophilus (strain ATCC 700396 / NCK56 / N2 / NCFM).